The sequence spans 301 residues: MGDLSCWTKVPGFTLTGELQYLKQVDDILRYGVRKRDRTGIGTLSLFGMQARYNLRNEFPLLTTKRVFWRAVVEELLWFIRGSTDSKELAAKDIHIWDIYGSSKFLNRNGFHKRHTGDLGPIYGFQWRHFGAEYKDCQSNYLQQGIDQLQTVIDTIKTNPESRRMIISSWNPKDIPLMVLPPCHTLCQFYVANGELSCQVYQRSGDMGLGVPFNIAGYALLTYIVAHVTGLKTGDLIHTMGDAHIYLNHIDALKVQLARSPKPFPCLKIIRNVTDINDFKWDDFQLDGYNPHPPLKMEMAL.

Residues Arg-38 and 163 to 164 contribute to the dUMP site; that span reads RR. The active-site Nucleophile is Cys-183. Residues 203 to 206, Asn-214, and 244 to 246 contribute to the dUMP site; these read RSGD and HIY. Residue Asp-206 coordinates (6R)-5,10-methylene-5,6,7,8-tetrahydrofolate. (6R)-5,10-methylene-5,6,7,8-tetrahydrofolate is bound at residue Ala-300.

The protein belongs to the thymidylate synthase family. In terms of assembly, homodimer.

The catalysed reaction is dUMP + (6R)-5,10-methylene-5,6,7,8-tetrahydrofolate = 7,8-dihydrofolate + dTMP. Its pathway is pyrimidine metabolism; dTTP biosynthesis. Catalyzes the reductive methylation of deoxyuridylate to thymidylate. The polypeptide is Thymidylate synthase (Varicella-zoster virus (strain Dumas) (HHV-3)).